The primary structure comprises 239 residues: Ribitol-5-phosphate cytidylyltransferase (239 aa).

CTP is bound by residues 7 to 10 (FAGG) and 80 to 86 (GETGQMS).

The protein belongs to the IspD/TarI cytidylyltransferase family. TarI subfamily.

It catalyses the reaction D-ribitol 5-phosphate + CTP + H(+) = CDP-L-ribitol + diphosphate. The protein operates within cell wall biogenesis; poly(ribitol phosphate) teichoic acid biosynthesis. Functionally, catalyzes the transfer of the cytidylyl group of CTP to D-ribitol 5-phosphate. The sequence is that of Ribitol-5-phosphate cytidylyltransferase from Streptococcus agalactiae serotype Ia (strain ATCC 27591 / A909 / CDC SS700).